Reading from the N-terminus, the 485-residue chain is MVHLGPKKPQARKGSMADVPKELMDEIHQLEDMFTVDSETLRKVVKHFIDELNKGLTKKGGNIPMIPGWVMEFPTGKESGNYLAIDLGGTNLRVVLVKLSGNHTFDTTQSKYKLPHDMRTTKHQEELWSFIADSLKDFMVEQELLNTKDTLPLGFTFSYPASQNKINEGILQRWTKGFDIPNVEGHDVVPLLQNEISKRELPIEIVALINDTVGTLIASYYTDPETKMGVIFGTGVNGAFYDVVSDIEKLEGKLADDIPSNSPMAINCEYGSFDNEHLVLPRTKYDVAVDEQSPRPGQQAFEKMTSGYYLGELLRLVLLELNEKGLMLKDQDLSKLKQPYIMDTSYPARIEDDPFENLEDTDDIFQKDFGVKTTLPERKLIRRLCELIGTRAARLAVCGIAAICQKRGYKTGHIAADGSVYNKYPGFKEAAAKGLRDIYGWTGDASKDPITIVPAEDGSGAGAAVIAALSEKRIAEGKSLGIIGA.

Positions Lys21–Ala468 constitute a Hexokinase domain. Residues Thr75–Ile209 form a hexokinase small subdomain region. ATP is bound by residues Asp86–Asn91 and Lys111. Substrate-binding positions include Ser158, Thr175–Lys176, Asn210–Asp211, and Asn237. Positions Asn210–Asp457 are hexokinase large subdomain. Ser245 bears the Phosphoserine mark. Residue Glu269 participates in substrate binding. Ser272 carries the post-translational modification Phosphoserine. Substrate is bound at residue Glu302. ATP contacts are provided by residues Gly307–Tyr308, Thr344–Ala348, and Ser419–Lys423.

The protein belongs to the hexokinase family. Homodimer.

It carries out the reaction a D-hexose + ATP = a D-hexose 6-phosphate + ADP + H(+). The catalysed reaction is D-fructose + ATP = D-fructose 6-phosphate + ADP + H(+). It catalyses the reaction D-glucose + ATP = D-glucose 6-phosphate + ADP + H(+). It participates in carbohydrate metabolism; hexose metabolism. Its pathway is carbohydrate degradation; glycolysis; D-glyceraldehyde 3-phosphate and glycerone phosphate from D-glucose: step 1/4. Subject to allosteric control. Substrate inhibition by ATP. In terms of biological role, catalyzes the phosphorylation of hexose, such as D-glucose and D-fructose, to hexose 6-phosphate (D-glucose 6-phosphate and D-fructose 6-phosphate, respectively). Mediates the initial step of glycolysis by catalyzing phosphorylation of D-glucose to D-glucose 6-phosphate. This chain is Hexokinase-1 (HXK1), found in Saccharomyces cerevisiae (strain ATCC 204508 / S288c) (Baker's yeast).